We begin with the raw amino-acid sequence, 144 residues long: Monooxygenase ptaG (144 aa).

It belongs to the avfA family.

The protein operates within secondary metabolite biosynthesis. Monooxygenase; part of the gene cluster that mediates the biosynthesis of pestheic acid, a diphenyl ether which is a biosynthetic precursor of the unique chloropupukeananes. The biosynthesis initiates from condensation of acetate and malonate units catalyzed by the non-reducing PKS ptaA. As the ptaA protein is TE/CLC domain-deficient, hydrolysis and Claisen cyclization of the polyketide could be catalyzed by ptaB containing a beta-lactamase domain. The ptaB protein might hydrolyze the thioester bond between the ACP of ptaA and the intermediate to release atrochrysone carboxylic acid, which is spontaneously dehydrated to form endocrocin anthrone. Endocrocin anthrone is then converted to endocrocin, catalyzed by the anthrone oxygenase ptaC. Spontaneous decarboxylation of endocrocin occurs to generate emodin. An O-methyltransferase (ptaH or ptaI) could methylate emodin to form physcion. PtaJ could then catalyze the oxidative cleavage of physcion, and rotation of the intermediate could then afford desmethylisosulochrin. PtaF, a putative NADH-dependent oxidoreductase, might also participate in the oxidative cleavage step. Desmethylisosulochrin is then transformed by another O-methyltransferase (ptaH or ptaI) to form isosulochrin. Chlorination of isosulochrin by ptaM in the cyclohexadienone B ring then produces chloroisosulochrin. PtaE is responsible for the oxidative coupling reactions of both benzophenones isosulochrin and chloroisosulochrin to RES-1214-1 and pestheic acid respectively, regardless of chlorination. The polypeptide is Monooxygenase ptaG (Pestalotiopsis fici (strain W106-1 / CGMCC3.15140)).